We begin with the raw amino-acid sequence, 128 residues long: RYamide neuropeptides (128 aa).

Positions 1-23 (MHARKLIVVLVYILTVLVSVAVS) are cleaved as a signal peptide. Residues 26 to 29 (YTSE) constitute a propeptide that is removed on maturation. A Tyrosine amide modification is found at Tyr44. The propeptide occupies 47–63 (GGPSPNNKENKVNIRPR). Residue Tyr73 is modified to Tyrosine amide. Positions 77–128 (SGWSPNASLVYPVSTPLCGLDEDLSCAYTGISDLYRCTPRKGESEEFTTSSN) are excised as a propeptide.

It localises to the secreted. In terms of biological role, neuropeptides RYamide-1 and RYamide-2 are ligands for the G-protein coupled receptor RYa-R. RYamide-2 is the most potent activator of RYa-R. In Tribolium castaneum (Red flour beetle), this protein is RYamide neuropeptides.